A 95-amino-acid polypeptide reads, in one-letter code: Protein TusB (95 aa).

Belongs to the DsrH/TusB family. As to quaternary structure, heterohexamer, formed by a dimer of trimers. The hexameric TusBCD complex contains 2 copies each of TusB, TusC and TusD. The TusBCD complex interacts with TusE.

The protein resides in the cytoplasm. Functionally, part of a sulfur-relay system required for 2-thiolation of 5-methylaminomethyl-2-thiouridine (mnm(5)s(2)U) at tRNA wobble positions. In Salmonella arizonae (strain ATCC BAA-731 / CDC346-86 / RSK2980), this protein is Protein TusB.